Reading from the N-terminus, the 257-residue chain is Imidazole glycerol phosphate synthase subunit HisF (257 aa).

Active-site residues include Asp-11 and Asp-130.

The protein belongs to the HisA/HisF family. Heterodimer of HisH and HisF.

It is found in the cytoplasm. It carries out the reaction 5-[(5-phospho-1-deoxy-D-ribulos-1-ylimino)methylamino]-1-(5-phospho-beta-D-ribosyl)imidazole-4-carboxamide + L-glutamine = D-erythro-1-(imidazol-4-yl)glycerol 3-phosphate + 5-amino-1-(5-phospho-beta-D-ribosyl)imidazole-4-carboxamide + L-glutamate + H(+). It participates in amino-acid biosynthesis; L-histidine biosynthesis; L-histidine from 5-phospho-alpha-D-ribose 1-diphosphate: step 5/9. In terms of biological role, IGPS catalyzes the conversion of PRFAR and glutamine to IGP, AICAR and glutamate. The HisF subunit catalyzes the cyclization activity that produces IGP and AICAR from PRFAR using the ammonia provided by the HisH subunit. This is Imidazole glycerol phosphate synthase subunit HisF from Aliivibrio fischeri (strain MJ11) (Vibrio fischeri).